The chain runs to 248 residues: Segregation and condensation protein A (248 aa).

It belongs to the ScpA family. Component of a cohesin-like complex composed of ScpA, ScpB and the Smc homodimer, in which ScpA and ScpB bind to the head domain of Smc. The presence of the three proteins is required for the association of the complex with DNA.

The protein localises to the cytoplasm. Its function is as follows. Participates in chromosomal partition during cell division. May act via the formation of a condensin-like complex containing Smc and ScpB that pull DNA away from mid-cell into both cell halves. This Clostridium perfringens (strain ATCC 13124 / DSM 756 / JCM 1290 / NCIMB 6125 / NCTC 8237 / Type A) protein is Segregation and condensation protein A.